The following is a 161-amino-acid chain: MKITNFTKSFLLYEIIVGMFLTLKYFFKSKVTIRYPNEVSKLSPRFKGEHALRRYPDGEERCIACKLCEAICPAQAITIEAKEQPNGSRRTTKYDIDMTKCIYCGLCQEACPVDAIVEGPNLEFATETHQELLYNKEKLLRNGDMWEHVIAKNLKVDSIYR.

2 consecutive 4Fe-4S ferredoxin-type domains span residues 52–82 and 92–121; these read LRRY…IEAK and TKYD…EGPN. 8 residues coordinate [4Fe-4S] cluster: C62, C65, C68, C72, C101, C104, C107, and C111.

The protein belongs to the complex I 23 kDa subunit family. As to quaternary structure, NDH-1 is composed of 14 different subunits. Subunits NuoA, H, J, K, L, M, N constitute the membrane sector of the complex. The cofactor is [4Fe-4S] cluster.

The protein localises to the cell inner membrane. The catalysed reaction is a quinone + NADH + 5 H(+)(in) = a quinol + NAD(+) + 4 H(+)(out). Functionally, NDH-1 shuttles electrons from NADH, via FMN and iron-sulfur (Fe-S) centers, to quinones in the respiratory chain. The immediate electron acceptor for the enzyme in this species is believed to be ubiquinone. Couples the redox reaction to proton translocation (for every two electrons transferred, four hydrogen ions are translocated across the cytoplasmic membrane), and thus conserves the redox energy in a proton gradient. This chain is NADH-quinone oxidoreductase subunit I, found in Orientia tsutsugamushi (strain Boryong) (Rickettsia tsutsugamushi).